The chain runs to 159 residues: MAPKGSQRVVNKVVAENRKARFNYEIIDTYEAGLVLMGTEVKSLREGKANIAESYASDEGGEIWLINSYLPEYLQANRFNHEPRRRRKLLLSGREIHRLRSAVNREGMTLIPLKIYFNDRGRAKMELALAKGKKLHDKRESEKERDWNRQKSRLLKDNG.

Residues Lys131 to Gly159 are disordered. Residues Asp137 to Gly159 are compositionally biased toward basic and acidic residues.

This sequence belongs to the SmpB family.

The protein resides in the cytoplasm. Its function is as follows. Required for rescue of stalled ribosomes mediated by trans-translation. Binds to transfer-messenger RNA (tmRNA), required for stable association of tmRNA with ribosomes. tmRNA and SmpB together mimic tRNA shape, replacing the anticodon stem-loop with SmpB. tmRNA is encoded by the ssrA gene; the 2 termini fold to resemble tRNA(Ala) and it encodes a 'tag peptide', a short internal open reading frame. During trans-translation Ala-aminoacylated tmRNA acts like a tRNA, entering the A-site of stalled ribosomes, displacing the stalled mRNA. The ribosome then switches to translate the ORF on the tmRNA; the nascent peptide is terminated with the 'tag peptide' encoded by the tmRNA and targeted for degradation. The ribosome is freed to recommence translation, which seems to be the essential function of trans-translation. The sequence is that of SsrA-binding protein from Rhizobium leguminosarum bv. trifolii (strain WSM2304).